A 388-amino-acid chain; its full sequence is Chorismate synthase (388 aa).

2 residues coordinate NADP(+): arginine 39 and arginine 45. FMN is bound by residues 130 to 132 (RSS), 251 to 252 (NA), glycine 296, 311 to 315 (KPIPT), and arginine 337.

Belongs to the chorismate synthase family. As to quaternary structure, homotetramer. The cofactor is FMNH2.

The enzyme catalyses 5-O-(1-carboxyvinyl)-3-phosphoshikimate = chorismate + phosphate. The protein operates within metabolic intermediate biosynthesis; chorismate biosynthesis; chorismate from D-erythrose 4-phosphate and phosphoenolpyruvate: step 7/7. Functionally, catalyzes the anti-1,4-elimination of the C-3 phosphate and the C-6 proR hydrogen from 5-enolpyruvylshikimate-3-phosphate (EPSP) to yield chorismate, which is the branch point compound that serves as the starting substrate for the three terminal pathways of aromatic amino acid biosynthesis. This reaction introduces a second double bond into the aromatic ring system. This chain is Chorismate synthase, found in Geobacillus thermodenitrificans (strain NG80-2).